Here is a 186-residue protein sequence, read N- to C-terminus: Transposon Tn21 resolvase (186 aa).

Residues 4–137 (QRIGYIRVST…EGIALAKQRG (134 aa)) form the Resolvase/invertase-type recombinase catalytic domain. Ser12 functions as the O-(5'-phospho-DNA)-serine intermediate in the catalytic mechanism. The H-T-H motif DNA-binding region spans 164–183 (KTKLAREFGISRETLYQYLR).

The protein belongs to the site-specific recombinase resolvase family.

Functionally, resolvase catalyzes the resolution (a site-specific recombination) of the cointegrated replicon to yield the final transposition products. The sequence is that of Transposon Tn21 resolvase (tnpR) from Escherichia coli.